Consider the following 415-residue polypeptide: Vascular endothelial growth factor C (415 aa).

Positions 1–31 (MHLLCFLSLACSLLAAALIPGPREAPATVAA) are cleaved as a signal peptide. A propeptide spanning residues 32–107 (FESGLGFSEA…RTGDTVKLAA (76 aa)) is cleaved from the precursor. 3 disulfides stabilise this stretch: cysteine 127–cysteine 169, cysteine 158–cysteine 205, and cysteine 162–cysteine 207. Asparagine 171, asparagine 201, and asparagine 236 each carry an N-linked (GlcNAc...) asparagine glycan. Positions 224 to 415 (SLPATLPQCQ…PSYWKRPHLN (192 aa)) are excised as a propeptide. Tandem repeats lie at residues 276–291 (CGPN…QCVC), 300–315 (CGPH…QCVC), 324–339 (CGAN…QCVC), and 343–358 (CPRN…ACEC). The tract at residues 276 to 358 (CGPNKELDED…LNPGKCACEC (83 aa)) is 4 X 16 AA repeats of C-X(10)-C-X-C-X(1,3)-C.

This sequence belongs to the PDGF/VEGF growth factor family. In terms of assembly, homodimer; non-covalent and antiparallel. Interacts with FLT4/VEGFR3; the interaction is required for FLT4/VEGFR3 homodimarization and activation. Undergoes a complex proteolytic maturation which generates a variety of processed secreted forms with increased activity toward VEGFR-3, but only the fully processed form could activate VEGFR-2. VEGF-C first form an antiparallel homodimer linked by disulfide bonds. Before secretion, a cleavage occurs between Arg-223 and Ser-224 producing a heterotetramer. The next extracellular step of the processing removes the N-terminal propeptide. Finally the mature VEGF-C is composed mostly of two VEGF homology domains (VHDs) bound by non-covalent interactions. As to expression, highly expressed in the lung, ovary, preputial gland and the adrenal gland. Expressed in the post-pubertal mammary glands.

The protein localises to the secreted. Its function is as follows. Growth factor active in angiogenesis, and endothelial cell growth, stimulating their proliferation and migration and also has effects on the permeability of blood vessels. May function in angiogenesis of the venous and lymphatic vascular systems during embryogenesis, and also in the maintenance of differentiated lymphatic endothelium in adults. Binds and activates KDR/VEGFR2 and FLT4/VEGFR3 receptors. The sequence is that of Vascular endothelial growth factor C (Vegfc) from Rattus norvegicus (Rat).